The chain runs to 152 residues: Cytochrome c oxidase subunit 5A, mitochondrial (152 aa).

Residues 1–43 (MLGTALRRCAVAAAAASRAGPRGLLHPAPAPGPAAAIQSIRCY) constitute a mitochondrion transit peptide. An SIFI-degron motif is present at residues 2–22 (LGTALRRCAVAAAAASRAGPR). N6-acetyllysine occurs at positions 89 and 115. Thr-143 is modified (phosphothreonine).

The protein belongs to the cytochrome c oxidase subunit 5A family. As to quaternary structure, component of the cytochrome c oxidase (complex IV, CIV), a multisubunit enzyme composed of 14 subunits. The complex is composed of a catalytic core of 3 subunits MT-CO1, MT-CO2 and MT-CO3, encoded in the mitochondrial DNA, and 11 supernumerary subunits COX4I, COX5A, COX5B, COX6A, COX6B, COX6C, COX7A, COX7B, COX7C, COX8 and NDUFA4, which are encoded in the nuclear genome. The complex exists as a monomer or a dimer and forms supercomplexes (SCs) in the inner mitochondrial membrane with NADH-ubiquinone oxidoreductase (complex I, CI) and ubiquinol-cytochrome c oxidoreductase (cytochrome b-c1 complex, complex III, CIII), resulting in different assemblies (supercomplex SCI(1)III(2)IV(1) and megacomplex MCI(2)III(2)IV(2)). Interacts with AFG1L. Interacts with RAB5IF. Post-translationally, in response to mitochondrial stress, the precursor protein is ubiquitinated by the SIFI complex in the cytoplasm before mitochondrial import, leading to its degradation. Within the SIFI complex, UBR4 initiates ubiquitin chain that are further elongated or branched by KCMF1.

Its subcellular location is the mitochondrion inner membrane. The protein operates within energy metabolism; oxidative phosphorylation. In terms of biological role, component of the cytochrome c oxidase, the last enzyme in the mitochondrial electron transport chain which drives oxidative phosphorylation. The respiratory chain contains 3 multisubunit complexes succinate dehydrogenase (complex II, CII), ubiquinol-cytochrome c oxidoreductase (cytochrome b-c1 complex, complex III, CIII) and cytochrome c oxidase (complex IV, CIV), that cooperate to transfer electrons derived from NADH and succinate to molecular oxygen, creating an electrochemical gradient over the inner membrane that drives transmembrane transport and the ATP synthase. Cytochrome c oxidase is the component of the respiratory chain that catalyzes the reduction of oxygen to water. Electrons originating from reduced cytochrome c in the intermembrane space (IMS) are transferred via the dinuclear copper A center (CU(A)) of subunit 2 and heme A of subunit 1 to the active site in subunit 1, a binuclear center (BNC) formed by heme A3 and copper B (CU(B)). The BNC reduces molecular oxygen to 2 water molecules using 4 electrons from cytochrome c in the IMS and 4 protons from the mitochondrial matrix. The chain is Cytochrome c oxidase subunit 5A, mitochondrial (COX5A) from Eulemur fulvus fulvus (Brown lemur).